The following is a 237-amino-acid chain: Octopine transport system permease protein OccQ (237 aa).

The 201-residue stretch at Thr-22–Phe-222 folds into the ABC transmembrane type-1 domain. 4 consecutive transmembrane segments (helical) span residues Met-26–Ala-46, Leu-72–Phe-92, Gly-96–Ala-116, and Ser-202–Phe-222.

This sequence belongs to the binding-protein-dependent transport system permease family. HisMQ subfamily.

The protein resides in the cell inner membrane. Functionally, component of the octopine active transport system probably consisting of four subunits: Q, M, P and T. The protein is Octopine transport system permease protein OccQ (occQ) of Agrobacterium tumefaciens (strain Ach5).